The primary structure comprises 185 residues: Peptide deformylase (185 aa).

Fe cation contacts are provided by C98 and H140. E141 is an active-site residue. H144 is a binding site for Fe cation.

This sequence belongs to the polypeptide deformylase family. Requires Fe(2+) as cofactor.

It carries out the reaction N-terminal N-formyl-L-methionyl-[peptide] + H2O = N-terminal L-methionyl-[peptide] + formate. In terms of biological role, removes the formyl group from the N-terminal Met of newly synthesized proteins. Requires at least a dipeptide for an efficient rate of reaction. N-terminal L-methionine is a prerequisite for activity but the enzyme has broad specificity at other positions. In Parabacteroides distasonis (strain ATCC 8503 / DSM 20701 / CIP 104284 / JCM 5825 / NCTC 11152), this protein is Peptide deformylase.